A 239-amino-acid chain; its full sequence is RBPJ-interacting and tubulin-associated protein 1 (239 aa).

Positions 12–24 (LDLSITGHSTALP) match the Nuclear export signal motif. Disordered stretches follow at residues 62 to 97 (APPSQTPLLWSPGEIKENKKTSSCRPKSTPAGTPRK) and 149 to 239 (LVQQ…PPWK). Positions 93–109 (GTPRKKIQYRVKSRTPS) match the Nuclear localization signal motif. The segment at 129 to 158 (WVKKEDTVKIRPLLWSPSPRLVQQSSMQNA) is interaction with RBPJ/RBPSUH. 2 stretches are compositionally biased toward polar residues: residues 149–159 (LVQQSSMQNAK) and 203–221 (RQRQSTPGRETVRSASCSG). The tract at residues 158 to 239 (AKQGPLRAVH…VKMQERPPWK (82 aa)) is interaction with tubulin.

This sequence belongs to the RITA family. Interacts with rbpj/rbpsuh.

The protein localises to the cytoplasm. It localises to the nucleus. Tubulin-binding protein that acts as a negative regulator of Notch signaling pathway. Shuttles between the cytoplasm and the nucleus and mediates the nuclear export of rbpj/rbpsuh, thereby preventing the interaction between rbpj/rbpsuh and NICD product of Notch proteins (Notch intracellular domain), leading to down-regulate Notch-mediated transcription. May play a role in neurogenesis. This Xenopus laevis (African clawed frog) protein is RBPJ-interacting and tubulin-associated protein 1 (rita1).